The primary structure comprises 268 residues: Glutamate racemase (268 aa).

Substrate contacts are provided by residues 10–11 (DS) and 42–43 (YG). Cys73 serves as the catalytic Proton donor/acceptor. 74–75 (NT) serves as a coordination point for substrate. The Proton donor/acceptor role is filled by Cys184. 185 to 186 (TH) serves as a coordination point for substrate.

It belongs to the aspartate/glutamate racemases family.

The enzyme catalyses L-glutamate = D-glutamate. It participates in cell wall biogenesis; peptidoglycan biosynthesis. Provides the (R)-glutamate required for cell wall biosynthesis. The chain is Glutamate racemase from Limosilactobacillus fermentum (strain NBRC 3956 / LMG 18251) (Lactobacillus fermentum).